Here is a 303-residue protein sequence, read N- to C-terminus: Acetyltransferase ataH (303 aa).

Positions methionine 1 to serine 23 are cleaved as a signal peptide. 3 consecutive transmembrane segments (helical) span residues phenylalanine 42 to phenylalanine 62, leucine 194 to leucine 214, and glycine 257 to phenylalanine 277.

The protein belongs to the wax synthase family.

It is found in the membrane. It participates in mycotoxin biosynthesis. In terms of biological role, acetyltransferase; part of the gene cluster that mediates the biosynthesis of acetylaranotin, a member of the epipolythiodioxopiperazine (ETP) class of toxins characterized by a disulfide-bridged cyclic dipeptide. The first step of acetylaranotin biosynthesis is performed by the NRPS ataP which produces diketopiperazine cyclo-L-Phe-L-Phe via the condensation of 2 phenylalanines (L-Phe). The ataC domain of ataTC then catalyzes the formation of bishydroxylation of cyclo-L-Phe-L-Phe. The glutathione S-transferase domain ataG in ataIMG further catalyzes the conjugation of two glutathiones to the bishydroxylated intermediate. Next, the dipeptidase ataJ removes the Glu residues. The following step is performed by the carbon sulfur lyase domain ataI of ataIMG which may convert the bis-cysteinyl adduct to yield an epidithiol intermediate. The ataT domain from ataTC then catalyzes the oxidation of the free dithiols, followed by a cyclization step catalyzed by the cytochrome P450 ataF. AtaF probably acts as an epoxidase to promote a dual epoxidation formation at C8 and C9 along with C8' and C9', followed by the spontaneous nucleophilic attack of the amide nitrogens N10 and N10' to yield an intermediate with the pyrrolidine partial structure. The final steps of acetylaranotin biosynthesis involve the acetylation and ring rearrangement of an epitetrathiodiketopiperazine intermediate to produce acetylaranotin. AtaH probably catalyzes the acetylation of epitetrathiodiketopiperazine to produce a diacetate and ataY is responsible for the formation of the dihydrooxepin moiety that converts the diacetate intermediate to acetylaranotin via acetylapoaranotin. Both enzymes could function independently in the absence of the other. The acetylaranotin bis-thiomethyltransferase ataS located outside of acetylaranotin gene cluster is the main thiomethyltransferase responsible for converting acetylaranotin and its related intermediates to their methylated forms. The polypeptide is Acetyltransferase ataH (Aspergillus terreus (strain NIH 2624 / FGSC A1156)).